Here is a 415-residue protein sequence, read N- to C-terminus: NADH-quinone oxidoreductase subunit D (415 aa).

The protein belongs to the complex I 49 kDa subunit family. NDH-1 is composed of 14 different subunits. Subunits NuoB, C, D, E, F, and G constitute the peripheral sector of the complex.

The protein localises to the cell inner membrane. It carries out the reaction a quinone + NADH + 5 H(+)(in) = a quinol + NAD(+) + 4 H(+)(out). NDH-1 shuttles electrons from NADH, via FMN and iron-sulfur (Fe-S) centers, to quinones in the respiratory chain. The immediate electron acceptor for the enzyme in this species is believed to be ubiquinone. Couples the redox reaction to proton translocation (for every two electrons transferred, four hydrogen ions are translocated across the cytoplasmic membrane), and thus conserves the redox energy in a proton gradient. In Myxococcus xanthus (strain DK1622), this protein is NADH-quinone oxidoreductase subunit D.